A 600-amino-acid polypeptide reads, in one-letter code: Arginine--tRNA ligase (600 aa).

The 'HIGH' region signature appears at 123–133 (PNVAKPMHVGH).

It belongs to the class-I aminoacyl-tRNA synthetase family. Monomer.

Its subcellular location is the cytoplasm. The catalysed reaction is tRNA(Arg) + L-arginine + ATP = L-arginyl-tRNA(Arg) + AMP + diphosphate. The sequence is that of Arginine--tRNA ligase from Caulobacter vibrioides (strain NA1000 / CB15N) (Caulobacter crescentus).